The following is a 257-amino-acid chain: Adenylate kinase (257 aa).

52–57 contacts ATP; that stretch reads GAGKGT. Residues 72 to 101 form an NMP region; that stretch reads ATGDMLRSQVAKKTELGKEAKKIMDQGGLV. AMP is bound by residues threonine 73, arginine 78, 99–101, 128–131, and glutamine 135; these read GLV and GFPR. The tract at residues 169 to 206 is LID; sequence GRLVHPASGRSYHKIFNPPKNDMKDDVTGEPLIQRSDD. Residues arginine 170 and 179–180 contribute to the ATP site; that span reads SY. Positions 203 and 214 each coordinate AMP. Residue glutamine 242 coordinates ATP.

It belongs to the adenylate kinase family. AK2 subfamily. Monomer.

It localises to the cytoplasm. It is found in the cytosol. The protein resides in the mitochondrion intermembrane space. The catalysed reaction is AMP + ATP = 2 ADP. In terms of biological role, catalyzes the reversible transfer of the terminal phosphate group between ATP and AMP. Plays an important role in cellular energy homeostasis and in adenine nucleotide metabolism. Adenylate kinase activity is critical for regulation of the phosphate utilization and the AMP de novo biosynthesis pathways. This is Adenylate kinase (adk1) from Neosartorya fischeri (strain ATCC 1020 / DSM 3700 / CBS 544.65 / FGSC A1164 / JCM 1740 / NRRL 181 / WB 181) (Aspergillus fischerianus).